A 200-amino-acid chain; its full sequence is Large ribosomal subunit protein uL4 (200 aa).

The disordered stretch occupies residues 38 to 73 (GRQGTKGQKSRSDVSGGGKRPWRQKGTGRARAGTTR).

This sequence belongs to the universal ribosomal protein uL4 family. As to quaternary structure, part of the 50S ribosomal subunit.

In terms of biological role, one of the primary rRNA binding proteins, this protein initially binds near the 5'-end of the 23S rRNA. It is important during the early stages of 50S assembly. It makes multiple contacts with different domains of the 23S rRNA in the assembled 50S subunit and ribosome. Its function is as follows. Forms part of the polypeptide exit tunnel. This is Large ribosomal subunit protein uL4 from Ectopseudomonas mendocina (strain ymp) (Pseudomonas mendocina).